The chain runs to 139 residues: uncharacterized protein (139 aa).

2 helical membrane passes run 35-55 and 57-77; these read LVFL…SFLI and FGIL…LTVI.

The protein resides in the membrane. This is an uncharacterized protein from Saccharomyces cerevisiae (strain ATCC 204508 / S288c) (Baker's yeast).